Consider the following 190-residue polypeptide: Elongation factor P 2 (190 aa).

The protein belongs to the elongation factor P family.

Its subcellular location is the cytoplasm. It functions in the pathway protein biosynthesis; polypeptide chain elongation. Involved in peptide bond synthesis. Stimulates efficient translation and peptide-bond synthesis on native or reconstituted 70S ribosomes in vitro. Probably functions indirectly by altering the affinity of the ribosome for aminoacyl-tRNA, thus increasing their reactivity as acceptors for peptidyl transferase. The polypeptide is Elongation factor P 2 (efp2) (Chlamydia pneumoniae (Chlamydophila pneumoniae)).